The chain runs to 188 residues: COMM domain-containing protein 1 (188 aa).

Residues 1 to 122 (MAAELEGSKC…CWDRGLRSLS (122 aa)) are sufficient for interaction with SLC12A2. H100, M109, and H133 together coordinate Cu cation. The COMM domain occupies 117-185 (GLRSLSWRVD…EVEESISTLM (69 aa)). Residues 124 to 188 (RVDGKSQSRH…ESISTLMQPA (65 aa)) are required for binding to PtdIns(4,5)P2.

The protein belongs to the COMM domain-containing protein 1 family. Component of the commander complex consisting of the CCC subcomplex and the retriever subcomplex. Component of the CCC (COMMD/CCDC22/CCDC93) subcomplex consisting of COMMD1, COMMD2, COMMD3, COMMD4, COMMD5, COMMD6, COMMD7, COMMD8, COMMD9, COMMD10, CCDC22 and CCDC93; within the complex forms a heterodimer with COMMD6. Interacts with VPS35L; the interaction associates the CCC complex with the retriever complex. Identified in a complex with an E3 ubiquitin ligase complex composed of TCEB1/elongin C, CUL2, SOCS1 and RBX1; in the complex interacts directly with SOCS1 and CUL2. Identified in a complex with NF-kappa-B. Interacts directly with SLC12A2. Interacts directly with ATP7B (via the N-terminal region). Interacts with ATP7A. Interacts with FAM107A; this interaction stabilizes COMMD1 in the nucleus. Interacts with CCS, CDKN2A, RELA, REL, RELB, NFKB1/p105, NFKB2/p100, NFKBIB, SCNN1D, SCNN1B, CFTR, CLU, SGK1, AKT1, CUL1, CUL2, CUL3, CUL4A, CUL4B, CUL5, CUL7, HIF1A. Ubiquitinated; undergoes both 'Lys-63'- and 'Lys-48'-linked polyubiquitination. Ubiquitinated by XIAP, leading to its proteasomal degradation.

Its subcellular location is the nucleus. The protein localises to the cytoplasm. It is found in the endosome membrane. It localises to the cytoplasmic vesicle. The protein resides in the early endosome. Its subcellular location is the recycling endosome. Scaffold protein in the commander complex that is essential for endosomal recycling of transmembrane cargos; the commander complex is composed of the CCC subcomplex and the retriever subcomplex. Can modulate activity of cullin-RING E3 ubiquitin ligase (CRL) complexes by displacing CAND1; in vitro promotes CRL E3 activity and dissociates CAND1 from CUL1 and CUL2. Promotes ubiquitination of NF-kappa-B subunit RELA and its subsequent proteasomal degradation. Down-regulates NF-kappa-B activity. Involved in the regulation of membrane expression and ubiquitination of SLC12A2. Modulates Na(+) transport in epithelial cells by regulation of apical cell surface expression of amiloride-sensitive sodium channel (ENaC) subunits and by promoting their ubiquitination presumably involving NEDD4L. Promotes the localization of SCNN1D to recycling endosomes. Promotes CFTR cell surface expression through regulation of its ubiquitination. Down-regulates SOD1 activity by interfering with its homodimerization. Plays a role in copper ion homeostasis. Involved in copper-dependent ATP7A trafficking between the trans-Golgi network and vesicles in the cell periphery; the function is proposed to depend on its association within the CCC complex and cooperation with the WASH complex on early endosomes. Can bind one copper ion per monomer. May function to facilitate biliary copper excretion within hepatocytes. Binds to phosphatidylinositol 4,5-bisphosphate (PtdIns(4,5)P2). Involved in the regulation of HIF1A-mediated transcription; competes with ARNT/Hif-1-beta for binding to HIF1A resulting in decreased DNA binding and impaired transcriptional activation by HIF-1. Negatively regulates neuroblastoma G1/S phase cell cycle progression and cell proliferation by stimulating ubiquitination of NF-kappa-B subunit RELA and NF-kappa-B degradation in a FAM107A- and actin-dependent manner. The polypeptide is COMM domain-containing protein 1 (COMMD1) (Bos taurus (Bovine)).